Consider the following 346-residue polypeptide: Probable choline kinase 3 (346 aa).

The ATP site is built by Arg71, Gln207, and Asp224.

This sequence belongs to the choline/ethanolamine kinase family.

The enzyme catalyses choline + ATP = phosphocholine + ADP + H(+). Its pathway is phospholipid metabolism; phosphatidylcholine biosynthesis; phosphocholine from choline: step 1/1. Its function is as follows. Involved in phospholipid biosynthesis. Catalyzes the first step in phosphatidylcholine biosynthesis. The polypeptide is Probable choline kinase 3 (Arabidopsis thaliana (Mouse-ear cress)).